The primary structure comprises 662 residues: PAN2-PAN3 deadenylation complex subunit PAN3 (662 aa).

Disordered stretches follow at residues 1–29 (MASA…NAKD) and 53–133 (DPHK…DTVT). The C3H1-type zinc finger occupies 26-55 (NAKDTLCRNITIYGRCRYEDKGCAFNHDPH). The span at 75–102 (SFTPSLLSSNGSSPTSTPATTKKMTTIS) shows a compositional bias: low complexity. Residues 115–133 (SVVSRSNASTPGLRQDTVT) are compositionally biased toward polar residues. The pseudokinase domain stretch occupies residues 263–525 (QTLPNTQLPA…NIDVFITGIS (263 aa)). ATP-binding positions include Arg315, 364 to 371 (DYHPLSKT), and 425 to 426 (SK). Residues 526–564 (SQLMSTFDSALHLDDQLTSDLSRELENGRLVRLMAKLNF) are a coiled coil. The knob domain stretch occupies residues 565–662 (VNERPEYEHD…ALMKPARRMH (98 aa)).

Belongs to the protein kinase superfamily. PAN3 family. As to quaternary structure, homodimer. Forms a heterotrimer with a catalytic subunit pan2 to form the poly(A)-nuclease (PAN) deadenylation complex. Interacts (via PAM-2 motif) with poly(A)-binding protein pab1 (via PABC domain), conferring substrate specificity of the enzyme complex.

Its subcellular location is the cytoplasm. Regulatory subunit of the poly(A)-nuclease (PAN) deadenylation complex, one of two cytoplasmic mRNA deadenylases involved in mRNA turnover. PAN specifically shortens poly(A) tails of RNA and the activity is stimulated by poly(A)-binding protein pab1. PAN deadenylation is followed by rapid degradation of the shortened mRNA tails by the CCR4-NOT complex. Deadenylated mRNAs are then degraded by two alternative mechanisms, namely exosome-mediated 3'-5' exonucleolytic degradation, or deadenylation-dependent mRNA decaping and subsequent 5'-3' exonucleolytic degradation by xrn1. May also be involved in post-transcriptional maturation of mRNA poly(A) tails. pan3 acts as a positive regulator for PAN activity, recruiting the catalytic subunit pan2 to mRNA via its interaction with RNA and with pab1. The chain is PAN2-PAN3 deadenylation complex subunit PAN3 from Aspergillus fumigatus (strain ATCC MYA-4609 / CBS 101355 / FGSC A1100 / Af293) (Neosartorya fumigata).